The following is a 372-amino-acid chain: MEKFMAEFGQGYVQTPFLSESNSVRYKISIAGSCPLSTAGPSYVKFQDNPVGSQTFSAGLHLRVFDPSTGALVDSKSYAFSTSNDTTSAAFVSFMNSLTNNRIVAILTSGKVNFPPEVVSWLRTAGTSAFPSDSILSRFDVSYAAFYTSSKRAIALEHVKLSNRKSTDDYQTILDVVFDSLEDVGATGFPRGTYESVEQFMSAVGGTNDEIARLPTSAAISKLSDYNLIPGDVLYLKAQLYADADLLALGTTNISIRFYNASNGYISSTQAEFTGQAGSWELKEDYVVVPENAVGFTIYAQRTAQAGQGGMRNLSFSEVSRNGGISKPAEFGVNGIRVNYICESASPPDIMVLPTQASSKTGKVFGQEFREV.

The 172-residue stretch at 22–193 (NSVRYKISIA…VGATGFPRGT (172 aa)) folds into the GG-type lectin domain.

As to quaternary structure, the long-tail fibers are trimeric, with a stoichiometry of gp34/gp37/gp36/gp35 of 3:3:3:1.

The protein resides in the virion. Functionally, structural component of the distal-half of the long-tail fiber. The long-tail fiber of T4 is about 1600 Angstroms long with a kink in the middle that divides the fiber into proximal and distal halves. The latter hinge is probably composed of gp35 protein. This Enterobacteria phage T4 (Bacteriophage T4) protein is Long-tail fiber protein gp35 (35).